The sequence spans 148 residues: MNIAKQQQAFLGIDYGKKRIGLAFASSPLLIPLPIGNVEARSSLTLTAQALVSIIKERAVTTVVFGNPLPMQKAYASSVQSEIQELAALIQEMTAIEVILWDERLSSAQAERMLKSDCGLNRKQRKNPSDSLAATLILSSFLDSRKLY.

The protein belongs to the YqgF nuclease family.

Its subcellular location is the cytoplasm. Its function is as follows. Could be a nuclease involved in processing of the 5'-end of pre-16S rRNA. The chain is Putative pre-16S rRNA nuclease from Chlamydia trachomatis serovar A (strain ATCC VR-571B / DSM 19440 / HAR-13).